The chain runs to 676 residues: F420-dependent formate dehydrogenase 2 subunit alpha (676 aa).

Positions 4 to 60 (FKVVHTICPYCGTGCGIDLVVKDGKVVDSHPFKRHPVNEGKVCIKGNYCYEFVHSED) constitute a 4Fe-4S Mo/W bis-MGD-type domain. The [4Fe-4S] cluster site is built by cysteine 11, cysteine 14, cysteine 18, and cysteine 46. A non-standard amino acid (selenocysteine) is located at residue selenocysteine 133.

This sequence belongs to the prokaryotic molybdopterin-containing oxidoreductase family. Dimer of an alpha (FdhA2) and a beta (FdhB2) subunit. [4Fe-4S] cluster is required as a cofactor. It depends on Mo-bis(molybdopterin guanine dinucleotide) as a cofactor. The cofactor is Zn(2+).

The enzyme catalyses oxidized coenzyme F420-(gamma-L-Glu)(n) + formate + 2 H(+) = reduced coenzyme F420-(gamma-L-Glu)(n) + CO2. Its function is as follows. Catalyzes the oxidation of formate to carbon dioxide, with coenzyme F420 as the electron acceptor. In vitro can also use methyl viologen as electron acceptor. This is F420-dependent formate dehydrogenase 2 subunit alpha from Methanococcus maripaludis (strain DSM 14266 / JCM 13030 / NBRC 101832 / S2 / LL).